Here is a 483-residue protein sequence, read N- to C-terminus: Aspartyl/glutamyl-tRNA(Asn/Gln) amidotransferase subunit B (483 aa).

The protein belongs to the GatB/GatE family. GatB subfamily. In terms of assembly, heterotrimer of A, B and C subunits.

The enzyme catalyses L-glutamyl-tRNA(Gln) + L-glutamine + ATP + H2O = L-glutaminyl-tRNA(Gln) + L-glutamate + ADP + phosphate + H(+). It catalyses the reaction L-aspartyl-tRNA(Asn) + L-glutamine + ATP + H2O = L-asparaginyl-tRNA(Asn) + L-glutamate + ADP + phosphate + 2 H(+). Its function is as follows. Allows the formation of correctly charged Asn-tRNA(Asn) or Gln-tRNA(Gln) through the transamidation of misacylated Asp-tRNA(Asn) or Glu-tRNA(Gln) in organisms which lack either or both of asparaginyl-tRNA or glutaminyl-tRNA synthetases. The reaction takes place in the presence of glutamine and ATP through an activated phospho-Asp-tRNA(Asn) or phospho-Glu-tRNA(Gln). In Anaplasma phagocytophilum (strain HZ), this protein is Aspartyl/glutamyl-tRNA(Asn/Gln) amidotransferase subunit B.